A 397-amino-acid polypeptide reads, in one-letter code: Phosphoribulokinase, chloroplastic (397 aa).

A chloroplast-targeting transit peptide spans Met1–Cys44. Residues Cys62 and Cys101 are joined by a disulfide bond.

The protein belongs to the phosphoribulokinase family.

The protein localises to the plastid. The protein resides in the chloroplast. It catalyses the reaction D-ribulose 5-phosphate + ATP = D-ribulose 1,5-bisphosphate + ADP + H(+). Its pathway is carbohydrate biosynthesis; Calvin cycle. Its activity is regulated as follows. Light regulated via thioredoxin by reversible oxidation/reduction of sulfhydryl/disulfide groups. This Mesembryanthemum crystallinum (Common ice plant) protein is Phosphoribulokinase, chloroplastic.